The chain runs to 360 residues: C-X-C chemokine receptor type 2 (360 aa).

At 1–48 (MTIILKDLSNSSILWEGFEDEFGNYSGTPPTEDYDYSPCEISTETLNK) the chain is on the extracellular side. N-linked (GlcNAc...) asparagine glycans are attached at residues asparagine 10 and asparagine 24. A helical transmembrane segment spans residues 49–75 (YAVVVIDALVFLLSLLGNSLVMLVILY). Over 76-84 (SRIGRSVTD) the chain is Cytoplasmic. Residues 85-105 (VYLLNLAMADLLFAMTLPIWT) traverse the membrane as a helical segment. Over 106–120 (ASKAKGWVFGTPLCK) the chain is Extracellular. A disulfide bond links cysteine 119 and cysteine 196. A helical transmembrane segment spans residues 121 to 142 (VVSLLKEVNFYSGILLLACISM). Residues 143 to 163 (DRYLAIVHATRTLTQKWHWVK) are Cytoplasmic-facing. Residues 164–183 (FICLGIWALSVILALPIFIF) form a helical membrane-spanning segment. The Extracellular segment spans residues 184 to 208 (REAYQPPYSDLVCYEDLGANTTKWR). The helical transmembrane segment at 209-231 (MIMRVLPQTFGFLLPLLVMLFCY) threads the bilayer. Over 232 to 251 (GFTLRTLFSAQMGHKHRAMR) the chain is Cytoplasmic. A helical membrane pass occupies residues 252-273 (VIFAVVLVFLLCWLPYNLVLIA). Residues 274–294 (DTLMRAHVIAETCQRRNDIGR) are Extracellular-facing. The helical transmembrane segment at 295–315 (ALDATEILGFLHSCLNPLIYV) threads the bilayer. Residues 316–360 (FIGQKFRHGLLKIMAIHGLISKEFLAKDGRPSFVGSSSGNTSTTL) lie on the Cytoplasmic side of the membrane.

The protein belongs to the G-protein coupled receptor 1 family. Interacts with IL8. Interacts with GNAI2. Phosphorylated upon ligand binding; which is required for desensitization.

Its subcellular location is the cell membrane. In terms of biological role, receptor for interleukin-8 which is a powerful neutrophil chemotactic factor. Binding of IL-8 to the receptor causes activation of neutrophils. This response is mediated via a G-protein that activates a phosphatidylinositol-calcium second messenger system. Binds to IL-8 with high affinity. Also binds with high affinity to CXCL3, GRO/MGSA and NAP-2. The protein is C-X-C chemokine receptor type 2 (CXCR2) of Bos taurus (Bovine).